The sequence spans 431 residues: Glucose-1-phosphate adenylyltransferase (431 aa).

Residues G163, 178–179, and S210 contribute to the alpha-D-glucose 1-phosphate site; that span reads EK.

Belongs to the bacterial/plant glucose-1-phosphate adenylyltransferase family. In terms of assembly, homotetramer.

The catalysed reaction is alpha-D-glucose 1-phosphate + ATP + H(+) = ADP-alpha-D-glucose + diphosphate. It functions in the pathway glycan biosynthesis; glycogen biosynthesis. Functionally, involved in the biosynthesis of ADP-glucose, a building block required for the elongation reactions to produce glycogen. Catalyzes the reaction between ATP and alpha-D-glucose 1-phosphate (G1P) to produce pyrophosphate and ADP-Glc. The protein is Glucose-1-phosphate adenylyltransferase of Synechococcus sp. (strain WH7803).